The chain runs to 428 residues: Glutamate-1-semialdehyde 2,1-aminomutase (428 aa).

Lysine 266 carries the N6-(pyridoxal phosphate)lysine modification.

It belongs to the class-III pyridoxal-phosphate-dependent aminotransferase family. HemL subfamily. In terms of assembly, homodimer. The cofactor is pyridoxal 5'-phosphate.

Its subcellular location is the cytoplasm. It carries out the reaction (S)-4-amino-5-oxopentanoate = 5-aminolevulinate. Its pathway is porphyrin-containing compound metabolism; protoporphyrin-IX biosynthesis; 5-aminolevulinate from L-glutamyl-tRNA(Glu): step 2/2. In Herminiimonas arsenicoxydans, this protein is Glutamate-1-semialdehyde 2,1-aminomutase.